We begin with the raw amino-acid sequence, 223 residues long: Adenylate kinase 4, mitochondrial (223 aa).

15–20 (GSGKGT) contacts a ribonucleoside 5'-triphosphate. The tract at residues 35–64 (SSGHFLRENIKANTEVGDMAKQYIEKGLLV) is NMP. The AMP site is built by Ser36 and Arg41. An N6-succinyllysine modification is found at Lys60. Residues 62-64 (LLV), 89-92 (GFPR), and Gln96 each bind AMP. The segment at 125 to 162 (RRWIHPPSGRVYNLDFNPPHVHGMDDVTGEPLVQQEDD) is LID. Residues Arg126 and 135–136 (VY) contribute to the a ribonucleoside 5'-triphosphate site. Arg170 is an AMP binding site. Residue Lys175 is modified to N6-acetyllysine. 2 positions are modified to N6-acetyllysine; alternate: Lys179 and Lys186. Lys179 and Lys186 each carry N6-succinyllysine; alternate. Thr199 serves as a coordination point for a ribonucleoside 5'-triphosphate.

It belongs to the adenylate kinase family. AK3 subfamily. Monomer. Interacts with SLC25A5/ANT2.

It is found in the mitochondrion matrix. It carries out the reaction a ribonucleoside 5'-phosphate + ATP = a ribonucleoside 5'-diphosphate + ADP. The catalysed reaction is AMP + ATP = 2 ADP. The enzyme catalyses GTP + AMP = GDP + ADP. It catalyses the reaction CMP + ATP = CDP + ADP. It carries out the reaction GTP + CMP = CDP + GDP. The catalysed reaction is dAMP + ATP = dADP + ADP. The enzyme catalyses dCMP + ATP = dCDP + ADP. It catalyses the reaction a 2'-deoxyribonucleoside 5'-diphosphate + ATP = a 2'-deoxyribonucleoside 5'-triphosphate + ADP. It carries out the reaction a ribonucleoside 5'-diphosphate + ATP = a ribonucleoside 5'-triphosphate + ADP. The catalysed reaction is GDP + ATP = GTP + ADP. The enzyme catalyses CDP + GTP = CTP + GDP. It catalyses the reaction CDP + ATP = CTP + ADP. It carries out the reaction UDP + ATP = UTP + ADP. The catalysed reaction is GTP + UDP = UTP + GDP. The enzyme catalyses dADP + GTP = dATP + GDP. It catalyses the reaction dCDP + GTP = dCTP + GDP. It carries out the reaction dCDP + ATP = dCTP + ADP. The catalysed reaction is dGDP + ATP = dGTP + ADP. The enzyme catalyses dTDP + GTP = dTTP + GDP. It catalyses the reaction dTDP + ATP = dTTP + ADP. Its function is as follows. Broad-specificity mitochondrial nucleoside phosphate kinase involved in cellular nucleotide homeostasis by catalyzing nucleoside-phosphate interconversions. Similar to other adenylate kinases, preferentially catalyzes the phosphorylation of the nucleoside monophosphate AMP with ATP as phosphate donor to produce ADP. Phosphorylates only AMP when using GTP as phosphate donor. In vitro, can also catalyze the phosphorylation of CMP, dAMP and dCMP and use GTP as an alternate phosphate donor. Moreover, exhibits a diphosphate kinase activity, producing ATP, CTP, GTP, UTP, TTP, dATP, dCTP and dGTP from the corresponding diphosphate substrates with either ATP or GTP as phosphate donors. Plays a role in controlling cellular ATP levels by regulating phosphorylation and activation of the energy sensor protein kinase AMPK. Plays a protective role in the cellular response to oxidative stress. The protein is Adenylate kinase 4, mitochondrial of Bos taurus (Bovine).